We begin with the raw amino-acid sequence, 185 residues long: Ribosome-recycling factor (185 aa).

It belongs to the RRF family.

The protein localises to the cytoplasm. Responsible for the release of ribosomes from messenger RNA at the termination of protein biosynthesis. May increase the efficiency of translation by recycling ribosomes from one round of translation to another. In Buchnera aphidicola subsp. Acyrthosiphon pisum (strain Tuc7), this protein is Ribosome-recycling factor.